Consider the following 108-residue polypeptide: UPF0060 membrane protein DSY4157 (108 aa).

4 helical membrane passes run 6 to 26 (ILFI…WLWL), 31 to 51 (PYWY…IPTL), 60 to 80 (VYAA…WGVD), and 86 to 106 (TYDW…LWAP).

It belongs to the UPF0060 family.

The protein localises to the cell membrane. The chain is UPF0060 membrane protein DSY4157 from Desulfitobacterium hafniense (strain Y51).